The chain runs to 1209 residues: Limbin (1209 aa).

The Extracellular portion of the chain corresponds to 1 to 200 (MKFSKEIEVF…VLPNHGLHAA (200 aa)). The N-linked (GlcNAc...) asparagine glycan is linked to Asn-120. Residues 201–221 (GFCVAFILSLVLTWAVLFFMV) traverse the membrane as a helical segment. Over 222 to 1209 (RYQCVKGSSL…KKAAWALGLN (988 aa)) the chain is Cytoplasmic. Coiled coils occupy residues 355–394 (TAEC…SAVE), 553–697 (KQKL…EERD), and 920–1012 (ELQE…METD). Residues 689 to 700 (ERLEGEERDRGQ) show a composition bias toward basic and acidic residues. The segment at 689-714 (ERLEGEERDRGQEGVQSVRQRLKDDA) is disordered.

As to quaternary structure, component of the EvC complex composed of EFCAB7, IQCE, EVC2 and EVC; built from two subcomplexes, EVC2:EVC and EFCAB7:IQCE. Interacts with EVC. Interacts (via N-terminal end) with EFCAB7. Interacts (via N-terminal end) with IQCE.

The protein resides in the cell membrane. It localises to the cytoplasm. It is found in the cytoskeleton. The protein localises to the cilium basal body. Its subcellular location is the cell projection. The protein resides in the cilium. It localises to the cilium membrane. It is found in the nucleus. Functionally, component of the EvC complex that positively regulates ciliary Hedgehog (Hh) signaling. Plays a critical role in bone formation and skeletal development. May be involved in early embryonic morphogenesis. This is Limbin (EVC2) from Bos taurus (Bovine).